The primary structure comprises 203 residues: Outer-membrane lipoprotein carrier protein (203 aa).

The N-terminal stretch at 1–21 (MKKLAITCALLSGMVVSQVWA) is a signal peptide. A disordered region spans residues 184–203 (DASKFTFTPPKGVTVDDQRK).

It belongs to the LolA family. Monomer.

Its subcellular location is the periplasm. Participates in the translocation of lipoproteins from the inner membrane to the outer membrane. Only forms a complex with a lipoprotein if the residue after the N-terminal Cys is not an aspartate (The Asp acts as a targeting signal to indicate that the lipoprotein should stay in the inner membrane). This Klebsiella pneumoniae (strain 342) protein is Outer-membrane lipoprotein carrier protein.